The chain runs to 629 residues: Putative polypeptide N-acetylgalactosaminyltransferase 10 (629 aa).

At 1–12 the chain is on the cytoplasmic side; the sequence is MGLSRYLSRRHH. Residues 13–33 form a helical; Signal-anchor for type II membrane protein membrane-spanning segment; that stretch reads WVIQYCALLLFLYFIYSYVAV. Residues 34–629 lie on the Lumenal side of the membrane; it reads SNDAPRLNEE…RQANEHKELE (596 aa). Asn-143 and Asn-177 each carry an N-linked (GlcNAc...) asparagine glycan. Intrachain disulfides connect Cys-154–Cys-385, Cys-376–Cys-454, Cys-493–Cys-510, Cys-539–Cys-556, and Cys-582–Cys-598. The segment at 163–275 is catalytic subdomain A; that stretch reads LPTVSVIFPF…YNWLPPLLDP (113 aa). Substrate-binding residues include Asp-204 and Arg-236. Residues Asp-259 and His-261 each coordinate Mn(2+). The interval 331–393 is catalytic subdomain B; sequence PFDSPVMAGG…PCSRVAHIYR (63 aa). Trp-362 lines the substrate pocket. Residue His-390 coordinates Mn(2+). Substrate is bound at residue Arg-393. The tract at residues 393 to 406 is flexible loop; that stretch reads RCKYAPFKNAGMGD. The region spanning 526–629 is the Ricin B-type lectin domain; sequence TRWHDIRPKG…RQANEHKELE (104 aa).

This sequence belongs to the glycosyltransferase 2 family. GalNAc-T subfamily. The cofactor is Mn(2+).

The protein resides in the golgi apparatus membrane. It catalyses the reaction L-seryl-[protein] + UDP-N-acetyl-alpha-D-galactosamine = a 3-O-[N-acetyl-alpha-D-galactosaminyl]-L-seryl-[protein] + UDP + H(+). It carries out the reaction L-threonyl-[protein] + UDP-N-acetyl-alpha-D-galactosamine = a 3-O-[N-acetyl-alpha-D-galactosaminyl]-L-threonyl-[protein] + UDP + H(+). The protein operates within protein modification; protein glycosylation. May catalyze the initial reaction in O-linked oligosaccharide biosynthesis, the transfer of an N-acetyl-D-galactosamine residue to a serine or threonine residue on the protein receptor. This Caenorhabditis briggsae protein is Putative polypeptide N-acetylgalactosaminyltransferase 10.